Here is a 53-residue protein sequence, read N- to C-terminus: UPF0391 membrane protein Bcen2424_6479 (53 aa).

Transmembrane regions (helical) follow at residues 5-25 (AIIFFIIAIIAAVFGFGGIAA) and 30-50 (IAKILFYIFVVIFLVTLLLGV).

It belongs to the UPF0391 family.

The protein resides in the cell membrane. The protein is UPF0391 membrane protein Bcen2424_6479 of Burkholderia cenocepacia (strain HI2424).